The following is a 299-amino-acid chain: Riboflavin transporter ImpX (299 aa).

EamA domains lie at 6–144 (KGAL…YLLT) and 162–294 (SLYS…SIIK). 10 helical membrane-spanning segments follow: residues 7-27 (GALLVCLAATMWGFDGIALTP), 34-54 (VPFVVFILHLLPLILMSILFG), 68-88 (DLFFFFCVALFGGCLGTLCIV), 101-121 (VVTLLQKLQPIFAIILARLLL), 129-149 (YLFWGFLALLGGYLLTFEFHL), 158-178 (LLPASLYSLLAAFSFGSATVF), 202-222 (IMFVIVTFTSGFGDFLVATAG), 224-244 (WLIFVIIALTTGSGAILLYYF), 253-273 (VATMCELCFPISSVVFDYLIN), and 276-296 (VLSPVQIASAILMIISIIKIS).

This sequence belongs to the EamA transporter family.

The protein resides in the cell membrane. In terms of biological role, transports riboflavin into the cell. The protein is Riboflavin transporter ImpX of Fusobacterium nucleatum subsp. nucleatum (strain ATCC 23726 / VPI 4351).